Consider the following 332-residue polypeptide: Ornithine carbamoyltransferase 1, catabolic (332 aa).

Carbamoyl phosphate is bound by residues 56-59 (STRT), Q83, R107, and 134-137 (HPTQ). L-ornithine contacts are provided by residues N167, D231, and 235-236 (SM). Carbamoyl phosphate-binding positions include 273-274 (CL) and R318.

The protein belongs to the aspartate/ornithine carbamoyltransferase superfamily. OTCase family.

It is found in the cytoplasm. It catalyses the reaction carbamoyl phosphate + L-ornithine = L-citrulline + phosphate + H(+). Its pathway is amino-acid degradation; L-arginine degradation via ADI pathway; carbamoyl phosphate from L-arginine: step 2/2. Its function is as follows. Reversibly catalyzes the transfer of the carbamoyl group from carbamoyl phosphate (CP) to the N(epsilon) atom of ornithine (ORN) to produce L-citrulline. The sequence is that of Ornithine carbamoyltransferase 1, catabolic (arcB1) from Staphylococcus epidermidis (strain ATCC 12228 / FDA PCI 1200).